Here is a 626-residue protein sequence, read N- to C-terminus: Chaperone protein HtpG (626 aa).

The tract at residues 1 to 341 is a; substrate-binding; that stretch reads METKQFKAES…SEDLSLNISR (341 aa). Residues 342-552 form a b region; the sequence is EILQHDRQLK…EGELSIEMEK (211 aa). The tract at residues 490-509 is disordered; the sequence is DLGIEGEEKENTSSSDDKEN. Over residues 498-509 the composition is skewed to basic and acidic residues; sequence KENTSSSDDKEN. The segment at 553-626 is c; that stretch reads VLNAMPNNQN…FTNNICKIMK (74 aa).

Belongs to the heat shock protein 90 family. In terms of assembly, homodimer.

It localises to the cytoplasm. Its function is as follows. Molecular chaperone. Has ATPase activity. This chain is Chaperone protein HtpG, found in Clostridium botulinum (strain Loch Maree / Type A3).